The chain runs to 124 residues: Fluoride-specific ion channel FluC (124 aa).

Helical transmembrane passes span 4–24 (VLLV…ISIF), 35–55 (FGTL…YALG), 60–80 (ISPE…TTFS), and 95–115 (WLKA…MVYL). Na(+) contacts are provided by glycine 74 and threonine 77.

The protein belongs to the fluoride channel Fluc/FEX (TC 1.A.43) family.

The protein resides in the cell inner membrane. The catalysed reaction is fluoride(in) = fluoride(out). Na(+) is not transported, but it plays an essential structural role and its presence is essential for fluoride channel function. Fluoride-specific ion channel. Important for reducing fluoride concentration in the cell, thus reducing its toxicity. The polypeptide is Fluoride-specific ion channel FluC (Shewanella putrefaciens (strain CN-32 / ATCC BAA-453)).